A 263-amino-acid polypeptide reads, in one-letter code: Hydroxyethylthiazole kinase 1 (263 aa).

Residue Met42 participates in substrate binding. Residues Lys118 and Thr164 each contribute to the ATP site. Gly191 provides a ligand contact to substrate.

It belongs to the Thz kinase family. Requires Mg(2+) as cofactor.

It catalyses the reaction 5-(2-hydroxyethyl)-4-methylthiazole + ATP = 4-methyl-5-(2-phosphooxyethyl)-thiazole + ADP + H(+). The protein operates within cofactor biosynthesis; thiamine diphosphate biosynthesis; 4-methyl-5-(2-phosphoethyl)-thiazole from 5-(2-hydroxyethyl)-4-methylthiazole: step 1/1. Functionally, catalyzes the phosphorylation of the hydroxyl group of 4-methyl-5-beta-hydroxyethylthiazole (THZ). This chain is Hydroxyethylthiazole kinase 1, found in Clostridium botulinum (strain 657 / Type Ba4).